The primary structure comprises 155 residues: SsrA-binding protein (155 aa).

The protein belongs to the SmpB family.

The protein resides in the cytoplasm. Functionally, required for rescue of stalled ribosomes mediated by trans-translation. Binds to transfer-messenger RNA (tmRNA), required for stable association of tmRNA with ribosomes. tmRNA and SmpB together mimic tRNA shape, replacing the anticodon stem-loop with SmpB. tmRNA is encoded by the ssrA gene; the 2 termini fold to resemble tRNA(Ala) and it encodes a 'tag peptide', a short internal open reading frame. During trans-translation Ala-aminoacylated tmRNA acts like a tRNA, entering the A-site of stalled ribosomes, displacing the stalled mRNA. The ribosome then switches to translate the ORF on the tmRNA; the nascent peptide is terminated with the 'tag peptide' encoded by the tmRNA and targeted for degradation. The ribosome is freed to recommence translation, which seems to be the essential function of trans-translation. The protein is SsrA-binding protein of Moorella thermoacetica (strain ATCC 39073 / JCM 9320).